We begin with the raw amino-acid sequence, 70 residues long: Turripeptide Ici9.2 (70 aa).

The signal sequence occupies residues Met1–Gly20. Residues Gln21–Cys70 enclose the Kazal-like domain. 3 cysteine pairs are disulfide-bonded: Cys26–Cys56, Cys30–Cys49, and Cys38–Cys70.

It belongs to the conopeptide P-like superfamily. As to expression, expressed by the venom duct.

Its subcellular location is the secreted. In terms of biological role, acts as a neurotoxin by inhibiting an ion channel. May also act as a serine protease inhibitor, since it possess the kazal serine protease inhibitor signature. The polypeptide is Turripeptide Ici9.2 (Iotyrris cingulifera (Sea snail)).